A 351-amino-acid chain; its full sequence is Actin maturation protease (351 aa).

The span at 1–19 shows a compositional bias: pro residues; that stretch reads MTSPCSPPLKPPISPPKTP. Residues 1–70 form a disordered region; that stretch reads MTSPCSPPLK…PPAATGPAPR (70 aa). Over residues 36–50 the composition is skewed to low complexity; that stretch reads LDFSALPSPPWSQQT. The span at 51-64 shows a compositional bias: pro residues; sequence PVPPPLPLPPPPAA. Positions 124 to 244 are peptidase C39-like; it reads SLIQEGPQCG…WAVSAGVLLG (121 aa). The active site involves cysteine 132. Serine 316 bears the Phosphoserine mark.

This sequence belongs to the ACTMAP family. In terms of assembly, interacts (via N-terminus) with PFN2 isoforms IIa and IIb; the interactions may facilitate efficient cleavage of the acetylated N-terminus of immature actin. Interacts with PFN1.

The protein localises to the cytoplasm. It catalyses the reaction N-terminal N(alpha)-acetyl-L-methionyl-L-aspartyl-[protein] + H2O = N-terminal L-aspartyl-[protein] + N-acetyl-L-methionine. It carries out the reaction N-terminal N(alpha)-acetyl-L-methionyl-L-glutamyl-[protein] + H2O = N-terminal L-glutamyl-[protein] + N-acetyl-L-methionine. The enzyme catalyses N-terminal N(alpha)-acetyl-L-cysteinyl-L-aspartyl-[protein] + H2O = N-terminal L-aspartyl-[protein] + N-acetyl-L-cysteine. The catalysed reaction is N-terminal N(alpha)-acetyl-L-cysteinyl-L-glutamyl-[protein] + H2O = N-terminal L-glutamyl-[protein] + N-acetyl-L-cysteine. Functionally, actin maturation protease that specifically mediates the cleavage of immature acetylated N-terminal actin, thereby contributing to actin maturation. Cleaves N-terminal acetylated methionine of immature cytoplasmic beta- and gamma-actins ACTB and ACTG1 after translation. Cleaves N-terminal acetylated cysteine of muscle alpha-actins ACTA1, ACTC1 and ACTA2 after canonical removal of N-terminal methionine. The chain is Actin maturation protease from Homo sapiens (Human).